We begin with the raw amino-acid sequence, 422 residues long: Phospholipase D Z (422 aa).

An N-terminal signal peptide occupies residues 1-18 (MMMKLLFLIALFGCVVNS). Residue asparagine 53 is glycosylated (N-linked (GlcNAc...) asparagine). Residues 148–175 (GAGILHTKVIVVDQVSAYLGSANLDWRS) enclose the PLD phosphodiesterase 1 domain. Residues histidine 153, lysine 155, and aspartate 160 contribute to the active site. 2 N-linked (GlcNAc...) asparagine glycosylation sites follow: asparagine 225 and asparagine 320. The 27-residue stretch at 357-383 (FTRVNHAKYMVTDEQSYVGTSNWSEDY) folds into the PLD phosphodiesterase 2 domain. Residues histidine 362, lysine 364, and aspartate 369 contribute to the active site. Asparagine 378 is a glycosylation site (N-linked (GlcNAc...) asparagine).

It belongs to the phospholipase D family.

It catalyses the reaction a 1,2-diacyl-sn-glycero-3-phosphocholine + H2O = a 1,2-diacyl-sn-glycero-3-phosphate + choline + H(+). Inhibited by butan-1-ol. Functionally, hydrolyzes membrane phospholipids, such as PtdCho (phosphatidylcholine), producing the free headgroup and PtdOH (phosphatidic acid; signaling molecule on its own). This Dictyostelium discoideum (Social amoeba) protein is Phospholipase D Z (pldZ).